Reading from the N-terminus, the 191-residue chain is Thymidine kinase (191 aa).

Residues 15–22 (GPMYSGKT) and 88–91 (DEAQ) each bind ATP. E89 functions as the Proton acceptor in the catalytic mechanism. Residues C145, C148, C183, and C186 each coordinate Zn(2+).

The protein belongs to the thymidine kinase family. In terms of assembly, homotetramer.

The protein localises to the cytoplasm. The catalysed reaction is thymidine + ATP = dTMP + ADP + H(+). In Clostridium botulinum (strain Loch Maree / Type A3), this protein is Thymidine kinase.